The chain runs to 510 residues: ETS translocation variant 5 (510 aa).

The disordered stretch occupies residues 131–208; the sequence is FKPLTPPTTP…QPLQMPKMMP (78 aa). The segment covering 161-174 has biased composition (low complexity); that stretch reads GHAPAAGPVQGVGP. Pro residues predominate over residues 175-185; sequence APAPHSLPEPG. S248 carries the phosphoserine modification. Residue K350 forms a Glycyl lysine isopeptide (Lys-Gly) (interchain with G-Cter in SUMO2) linkage. Positions 368–448 form a DNA-binding region, ETS; that stretch reads LQLWQFLVTL…AGERYVYKFV (81 aa).

As to quaternary structure, interacts (via C-terminal) with ZMYM5 (via N-terminal 120 amino acid region). As to expression, ubiquitous.

The protein localises to the nucleus. Functionally, binds to DNA sequences containing the consensus nucleotide core sequence 5'-GGAA.-3'. This chain is ETS translocation variant 5 (ETV5), found in Homo sapiens (Human).